Here is a 214-residue protein sequence, read N- to C-terminus: Adenylate kinase (214 aa).

ATP is bound at residue 10–15 (GAGKGT). The segment at 30 to 59 (STGDMLRAAVKAQSELGRQAKALMDAGKLV) is NMP. AMP is bound by residues Thr-31, Arg-36, 57–59 (KLV), 85–88 (GFPR), and Gln-92. An LID region spans residues 122–159 (GRRVHAPSGRVYHVKFNPPKQEGKDDVTGELLTSRKDD). Residues Arg-123 and 132-133 (VY) each bind ATP. Arg-156 and Arg-167 together coordinate AMP. Arg-200 contributes to the ATP binding site.

This sequence belongs to the adenylate kinase family. Monomer.

Its subcellular location is the cytoplasm. The enzyme catalyses AMP + ATP = 2 ADP. Its pathway is purine metabolism; AMP biosynthesis via salvage pathway; AMP from ADP: step 1/1. Functionally, catalyzes the reversible transfer of the terminal phosphate group between ATP and AMP. Plays an important role in cellular energy homeostasis and in adenine nucleotide metabolism. In Sodalis glossinidius (strain morsitans), this protein is Adenylate kinase.